The sequence spans 105 residues: Large ribosomal subunit protein uL24 (105 aa).

The protein belongs to the universal ribosomal protein uL24 family. Part of the 50S ribosomal subunit.

Functionally, one of two assembly initiator proteins, it binds directly to the 5'-end of the 23S rRNA, where it nucleates assembly of the 50S subunit. Its function is as follows. One of the proteins that surrounds the polypeptide exit tunnel on the outside of the subunit. This Nitrosospira multiformis (strain ATCC 25196 / NCIMB 11849 / C 71) protein is Large ribosomal subunit protein uL24.